Here is a 233-residue protein sequence, read N- to C-terminus: Large ribosomal subunit protein uL2 (233 aa).

The tract at residues 194 to 233 (HPHGGGNHQHVGRPSTVGRGTPPGRKVGRLSPKRRKKYGR) is disordered. The span at 219-233 (KVGRLSPKRRKKYGR) shows a compositional bias: basic residues.

This sequence belongs to the universal ribosomal protein uL2 family. As to quaternary structure, part of the 50S ribosomal subunit. Forms a bridge to the 30S subunit in the 70S ribosome.

One of the primary rRNA binding proteins. Required for association of the 30S and 50S subunits to form the 70S ribosome, for tRNA binding and peptide bond formation. It has been suggested to have peptidyltransferase activity; this is somewhat controversial. Makes several contacts with the 16S rRNA in the 70S ribosome. The sequence is that of Large ribosomal subunit protein uL2 from Picrophilus torridus (strain ATCC 700027 / DSM 9790 / JCM 10055 / NBRC 100828 / KAW 2/3).